Here is a 136-residue protein sequence, read N- to C-terminus: Small ribosomal subunit protein uS9 (136 aa).

A compositionally biased stretch (basic and acidic residues) spans Pro103–Ala116. A disordered region spans residues Pro103–Arg136. The span at Lys117–Arg136 shows a compositional bias: basic residues.

Belongs to the universal ribosomal protein uS9 family.

The chain is Small ribosomal subunit protein uS9 (rpsI) from Prochlorococcus marinus (strain SARG / CCMP1375 / SS120).